We begin with the raw amino-acid sequence, 641 residues long: 1-deoxy-D-xylulose-5-phosphate synthase (641 aa).

Thiamine diphosphate contacts are provided by residues histidine 79 and 120–122; that span reads AHS. Aspartate 151 is a Mg(2+) binding site. Thiamine diphosphate is bound by residues 152-153, asparagine 180, tyrosine 290, and glutamate 372; that span reads GA. Asparagine 180 is a binding site for Mg(2+).

Belongs to the transketolase family. DXPS subfamily. Homodimer. Requires Mg(2+) as cofactor. Thiamine diphosphate serves as cofactor.

The catalysed reaction is D-glyceraldehyde 3-phosphate + pyruvate + H(+) = 1-deoxy-D-xylulose 5-phosphate + CO2. The protein operates within metabolic intermediate biosynthesis; 1-deoxy-D-xylulose 5-phosphate biosynthesis; 1-deoxy-D-xylulose 5-phosphate from D-glyceraldehyde 3-phosphate and pyruvate: step 1/1. Its function is as follows. Catalyzes the acyloin condensation reaction between C atoms 2 and 3 of pyruvate and glyceraldehyde 3-phosphate to yield 1-deoxy-D-xylulose-5-phosphate (DXP). The sequence is that of 1-deoxy-D-xylulose-5-phosphate synthase from Bradyrhizobium sp. (strain BTAi1 / ATCC BAA-1182).